The chain runs to 360 residues: 3-isopropylmalate dehydrogenase (360 aa).

76–89 contacts NAD(+); sequence GPKWDTIERDIRPE. 4 residues coordinate substrate: arginine 96, arginine 106, arginine 134, and aspartate 224. Residues aspartate 224, aspartate 248, and aspartate 252 each contribute to the Mg(2+) site. 282-294 provides a ligand contact to NAD(+); the sequence is GSAPDIAGKGIAN.

The protein belongs to the isocitrate and isopropylmalate dehydrogenases family. LeuB type 1 subfamily. Homodimer. Mg(2+) is required as a cofactor. Mn(2+) serves as cofactor.

The protein resides in the cytoplasm. The enzyme catalyses (2R,3S)-3-isopropylmalate + NAD(+) = 4-methyl-2-oxopentanoate + CO2 + NADH. Its pathway is amino-acid biosynthesis; L-leucine biosynthesis; L-leucine from 3-methyl-2-oxobutanoate: step 3/4. Functionally, catalyzes the oxidation of 3-carboxy-2-hydroxy-4-methylpentanoate (3-isopropylmalate) to 3-carboxy-4-methyl-2-oxopentanoate. The product decarboxylates to 4-methyl-2 oxopentanoate. This Pseudomonas savastanoi pv. phaseolicola (strain 1448A / Race 6) (Pseudomonas syringae pv. phaseolicola (strain 1448A / Race 6)) protein is 3-isopropylmalate dehydrogenase.